Here is a 294-residue protein sequence, read N- to C-terminus: Glyceraldehyde-3-phosphate dehydrogenase (294 aa).

Aspartate 19, arginine 63, and threonine 105 together coordinate NAD(+). Residues 134–136, threonine 165, 194–195, and arginine 217 contribute to the D-glyceraldehyde 3-phosphate site; these read SCT and TG. Catalysis depends on cysteine 135, which acts as the Nucleophile.

It belongs to the glyceraldehyde-3-phosphate dehydrogenase family. Homotetramer.

It is found in the cytoplasm. The catalysed reaction is D-glyceraldehyde 3-phosphate + phosphate + NAD(+) = (2R)-3-phospho-glyceroyl phosphate + NADH + H(+). It functions in the pathway carbohydrate degradation; glycolysis; pyruvate from D-glyceraldehyde 3-phosphate: step 1/5. Functionally, catalyzes the oxidative phosphorylation of glyceraldehyde 3-phosphate (G3P) to 1,3-bisphosphoglycerate (BPG) using the cofactor NAD. The first reaction step involves the formation of a hemiacetal intermediate between G3P and a cysteine residue, and this hemiacetal intermediate is then oxidized to a thioester, with concomitant reduction of NAD to NADH. The reduced NADH is then exchanged with the second NAD, and the thioester is attacked by a nucleophilic inorganic phosphate to produce BPG. This Shimwellia blattae (Escherichia blattae) protein is Glyceraldehyde-3-phosphate dehydrogenase (gap).